Here is a 222-residue protein sequence, read N- to C-terminus: 2-C-methyl-D-erythritol 4-phosphate cytidylyltransferase (222 aa).

It belongs to the IspD/TarI cytidylyltransferase family. IspD subfamily.

It catalyses the reaction 2-C-methyl-D-erythritol 4-phosphate + CTP + H(+) = 4-CDP-2-C-methyl-D-erythritol + diphosphate. The protein operates within isoprenoid biosynthesis; isopentenyl diphosphate biosynthesis via DXP pathway; isopentenyl diphosphate from 1-deoxy-D-xylulose 5-phosphate: step 2/6. Functionally, catalyzes the formation of 4-diphosphocytidyl-2-C-methyl-D-erythritol from CTP and 2-C-methyl-D-erythritol 4-phosphate (MEP). The sequence is that of 2-C-methyl-D-erythritol 4-phosphate cytidylyltransferase from Thermotoga sp. (strain RQ2).